The sequence spans 387 residues: 3-ketoacyl-CoA thiolase (387 aa).

Catalysis depends on C91, which acts as the Acyl-thioester intermediate. Catalysis depends on proton acceptor residues H343 and C373.

This sequence belongs to the thiolase-like superfamily. Thiolase family. In terms of assembly, heterotetramer of two alpha chains (FadB) and two beta chains (FadA).

The protein resides in the cytoplasm. The catalysed reaction is an acyl-CoA + acetyl-CoA = a 3-oxoacyl-CoA + CoA. The protein operates within lipid metabolism; fatty acid beta-oxidation. In terms of biological role, catalyzes the final step of fatty acid oxidation in which acetyl-CoA is released and the CoA ester of a fatty acid two carbons shorter is formed. The protein is 3-ketoacyl-CoA thiolase of Vibrio cholerae serotype O1 (strain ATCC 39541 / Classical Ogawa 395 / O395).